The following is a 437-amino-acid chain: UDP-N-acetylmuramoylalanine--D-glutamate ligase (437 aa).

Residue 115-121 (GSNGKST) coordinates ATP.

This sequence belongs to the MurCDEF family.

Its subcellular location is the cytoplasm. The catalysed reaction is UDP-N-acetyl-alpha-D-muramoyl-L-alanine + D-glutamate + ATP = UDP-N-acetyl-alpha-D-muramoyl-L-alanyl-D-glutamate + ADP + phosphate + H(+). It functions in the pathway cell wall biogenesis; peptidoglycan biosynthesis. Functionally, cell wall formation. Catalyzes the addition of glutamate to the nucleotide precursor UDP-N-acetylmuramoyl-L-alanine (UMA). This is UDP-N-acetylmuramoylalanine--D-glutamate ligase from Vibrio campbellii (strain ATCC BAA-1116).